The chain runs to 296 residues: Polyamine aminopropyltransferase (296 aa).

Positions 16-251 constitute a PABS domain; sequence HLWYFEYYTG…GMWSYTFASK (236 aa). An S-methyl-5'-thioadenosine-binding site is contributed by Gln46. The spermidine site is built by His77 and Asp101. Residues Glu121 and 152–153 contribute to the S-methyl-5'-thioadenosine site; that span reads NG. The active-site Proton acceptor is Asp170. Spermidine is bound at residue 170–173; sequence DSTD.

This sequence belongs to the spermidine/spermine synthase family. In terms of assembly, homodimer or homotetramer.

The protein resides in the cytoplasm. The enzyme catalyses S-adenosyl 3-(methylsulfanyl)propylamine + putrescine = S-methyl-5'-thioadenosine + spermidine + H(+). It functions in the pathway amine and polyamine biosynthesis; spermidine biosynthesis; spermidine from putrescine: step 1/1. Functionally, catalyzes the irreversible transfer of a propylamine group from the amino donor S-adenosylmethioninamine (decarboxy-AdoMet) to putrescine (1,4-diaminobutane) to yield spermidine. This chain is Polyamine aminopropyltransferase, found in Thermotoga neapolitana (strain ATCC 49049 / DSM 4359 / NBRC 107923 / NS-E).